A 546-amino-acid chain; its full sequence is 2-isopropylmalate synthase (546 aa).

The Pyruvate carboxyltransferase domain maps to 8 to 271 (ILIFDTTLRD…NKFFNRNSDS (264 aa)). Residues Asp17, His208, His210, and Asn244 each coordinate Mn(2+). A regulatory domain region spans residues 408 to 546 (QLSLVQVSCG…DKTLLSNPGK (139 aa)).

The protein belongs to the alpha-IPM synthase/homocitrate synthase family. LeuA type 1 subfamily. As to quaternary structure, homodimer. Requires Mn(2+) as cofactor.

It is found in the cytoplasm. The catalysed reaction is 3-methyl-2-oxobutanoate + acetyl-CoA + H2O = (2S)-2-isopropylmalate + CoA + H(+). It participates in amino-acid biosynthesis; L-leucine biosynthesis; L-leucine from 3-methyl-2-oxobutanoate: step 1/4. Its function is as follows. Catalyzes the condensation of the acetyl group of acetyl-CoA with 3-methyl-2-oxobutanoate (2-ketoisovalerate) to form 3-carboxy-3-hydroxy-4-methylpentanoate (2-isopropylmalate). This Prochlorococcus marinus (strain MIT 9215) protein is 2-isopropylmalate synthase.